Reading from the N-terminus, the 95-residue chain is Large ribosomal subunit protein uL23 (95 aa).

Belongs to the universal ribosomal protein uL23 family. Part of the 50S ribosomal subunit. Contacts protein L29, and trigger factor when it is bound to the ribosome.

One of the early assembly proteins it binds 23S rRNA. One of the proteins that surrounds the polypeptide exit tunnel on the outside of the ribosome. Forms the main docking site for trigger factor binding to the ribosome. This chain is Large ribosomal subunit protein uL23, found in Rubrobacter xylanophilus (strain DSM 9941 / JCM 11954 / NBRC 16129 / PRD-1).